The following is a 135-amino-acid chain: Small ribosomal subunit protein uS12 (135 aa).

Asp-89 is modified (3-methylthioaspartic acid). The tract at residues 103 to 135 is disordered; the sequence is DTAGVKNRMQSRSKYGTKRPKPGQAAAPAGKKR. The segment covering 111 to 123 has biased composition (basic residues); the sequence is MQSRSKYGTKRPK. Residues 124–135 show a composition bias toward low complexity; it reads PGQAAAPAGKKR.

It belongs to the universal ribosomal protein uS12 family. As to quaternary structure, part of the 30S ribosomal subunit. Contacts proteins S8 and S17. May interact with IF1 in the 30S initiation complex.

Its function is as follows. With S4 and S5 plays an important role in translational accuracy. Functionally, interacts with and stabilizes bases of the 16S rRNA that are involved in tRNA selection in the A site and with the mRNA backbone. Located at the interface of the 30S and 50S subunits, it traverses the body of the 30S subunit contacting proteins on the other side and probably holding the rRNA structure together. The combined cluster of proteins S8, S12 and S17 appears to hold together the shoulder and platform of the 30S subunit. The protein is Small ribosomal subunit protein uS12 of Gloeobacter violaceus (strain ATCC 29082 / PCC 7421).